Here is a 793-residue protein sequence, read N- to C-terminus: Flavin carrier protein 1 (793 aa).

A signal peptide spans 1–21; sequence MQVLVTLWCLICTCLVLPVAA. The Lumenal segment spans residues 22-163; that stretch reads KKRTLTASSL…FFSNGKTVSQ (142 aa). A glycan (N-linked (GlcNAc...) asparagine) is linked at Asn-143. The helical transmembrane segment at 164–184 threads the bilayer; that stretch reads IGVKWVTAVIAGIGLLTSAVL. The Cytoplasmic portion of the chain corresponds to 185 to 194; sequence STFGNSTAAS. The chain crosses the membrane as a helical span at residues 195–215; the sequence is HISANTMSLFLYFQSVAVVAM. The Lumenal segment spans residues 216-223; sequence QHVDSVPP. Residues 224–244 traverse the membrane as a helical segment; sequence IAAAWSENLAWSMGLIRITFM. Residues 245 to 249 are Cytoplasmic-facing; sequence QKIFR. The helical transmembrane segment at 250–272 threads the bilayer; sequence WYVEATGGSASLYLTATTMSVLT. Over 273 to 317 the chain is Lumenal; it reads QRGLDYLKNTSVYKRAENVLYGNSNTLIFRGIKRMGYRMKIENTA. Asn-281 is a glycosylation site (N-linked (GlcNAc...) asparagine). Residues 318–338 form a helical membrane-spanning segment; sequence IVCTGFTFFVLCGYFLAGFIM. Residues 339–372 lie on the Cytoplasmic side of the membrane; the sequence is ACKYSIELCIRCGWMRSDRFYQFRKNWRSVLKGS. Residues 373-393 form a helical membrane-spanning segment; it reads LLRYIYIGFTQLTILSFWEFT. Residues 394–397 are Lumenal-facing; that stretch reads ERDS. The helical transmembrane segment at 398-418 threads the bilayer; it reads AGVIVIACLFIVLSCGLMAWA. Topologically, residues 419–461 are cytoplasmic; it reads AYRTIFFASKSVEMYNNPAALLYGDEYVLNKYGFFYTMFNAKH. The chain crosses the membrane as a helical span at residues 462 to 482; it reads YWWNALLTTYILVKALFVGFA. The Lumenal segment spans residues 483–484; it reads QA. The chain crosses the membrane as a helical span at residues 485 to 505; that stretch reads SGKTQALAIFIIDLAYFVAII. The Cytoplasmic segment spans residues 506–516; sequence RYKPYLDRPTN. The chain crosses the membrane as a helical span at residues 517-537; that stretch reads IVNIFICTVTLVNSFLFMFFS. Residues 538 to 551 are Lumenal-facing; it reads NLFNQKYAVSAIMG. The chain crosses the membrane as a helical span at residues 552 to 572; it reads WVFFIMNAAFSLLLLLMILAF. Residues 573 to 793 lie on the Cytoplasmic side of the membrane; that stretch reads TTIILFSKNP…KANILDPDYL (221 aa). Ser-610 bears the Phosphoserine mark. Thr-626 is subject to Phosphothreonine. Disordered regions lie at residues 649-674 and 689-731; these read YDDE…PTFS and KLGS…QESE. A compositionally biased stretch (polar residues) spans 701–719; the sequence is ITQQEVSPDRASSSPNSKS. Residues Ser-771 and Ser-774 each carry the phosphoserine modification.

The protein belongs to the transient receptor potential (TRP) ion channel family.

Its subcellular location is the endoplasmic reticulum membrane. May be responsible for the transport of FAD into the endoplasmic reticulum lumen, where it is required for oxidative protein folding. The polypeptide is Flavin carrier protein 1 (FLC1) (Saccharomyces cerevisiae (strain ATCC 204508 / S288c) (Baker's yeast)).